We begin with the raw amino-acid sequence, 152 residues long: UPF0266 membrane protein ESA_01432 (152 aa).

The next 3 helical transmembrane spans lie at 1-21, 45-65, and 67-87; these read MTLT…WAIY, ADSL…VASH, and ALLT…LFWI.

It belongs to the UPF0266 family.

It localises to the cell inner membrane. The chain is UPF0266 membrane protein ESA_01432 from Cronobacter sakazakii (strain ATCC BAA-894) (Enterobacter sakazakii).